A 906-amino-acid chain; its full sequence is MASRHRRGAFPAGAKAAPEAEAAKESVAVAVRFRPLSPREVRRGEKIAWYADGETVARSEQSNLAYAYDRVFGPTTTTRHIYDAVAQYVVNGAMKGINGTIFAYGVTSSGKTHTMHGDQISPGVIPLAVKDIFNIIQETPNREFLLRVSYLEIYNEVVNDLLNPAGQNLRIREDLQGTIVEGIKEEAVLSPVHALSLIAAGEELRHVGSTNFNLLSSRSHTIFTLTIESSPRGQSNEAEAVTLSQLNLIDLAGSESSRVETAGVHQKEGSYINKSLLTLGKVISKLTDEKATHIPFRDSKLTRLLKSSLSGQGRVSLICTVTPASSNSEETHNTLKFAHRAKHIEIQATQNKIMDARSLIKKYQNEIRQLKEELEQLRRSIRTGTPIEDTMQKKHHLLETKEDCNVKLQSRLEQGEEAKAALLERIEHLTELILVSAKASRTTKSSHCPRRRHSFGEEELAYLPYERQDIILDNESNMLFVPIEGFGEKFKSSPKEETENQKGHLNWLNLRKCDSGSTNLTSSDGENPSSTKSLPALSTPLGIGFFNVTSEQRMSDYMLAENVPANLLCVGHREFPSDSLPVQETPLVSRKTSDHVDILREQFNILSGEVALHQSVLKRLSEEAGKNAMNEQIEMEMKVVNDEVKLNKQKIASLERRISNSMSNSRGMHDNLELSLPYIEIPEQLNEKAFQLEASECQEFLLSERTTFQHNTGIVQETGSQAHKGKPLPSDVSDEFLKKASQAEIDELKQRVSELTEAKSQLDSCNHKLLEESTYAKGLASVTSVELKALSVKVTKLMKQNERLSSELASGRNQRRGSHGPRGARRESHTKRYEPARRGDMNALEAMLKEKDQRQAELHTKIEESKQKEAFLEKELANMWTVLANLKKTRGIDQEDFDSKYNGSWA.

Residues 26-344 (SVAVAVRFRP…LKFAHRAKHI (319 aa)) form the Kinesin motor domain. 105–112 (GVTSSGKT) lines the ATP pocket. Coiled coils occupy residues 346–385 (IQATQNKIMDARSLIKKYQNEIRQLKEELEQLRRSIRTGT), 733–814 (SDEF…GRNQ), and 839–875 (GDMNALEAMLKEKDQRQAELHTKIEESKQKEAFLEKE). Residues 803 to 840 (RLSSELASGRNQRRGSHGPRGARRESHTKRYEPARRGD) are disordered. Over residues 813–823 (NQRRGSHGPRG) the composition is skewed to basic residues. Residues 824 to 840 (ARRESHTKRYEPARRGD) are compositionally biased toward basic and acidic residues.

This sequence belongs to the TRAFAC class myosin-kinesin ATPase superfamily. Kinesin family. KIN-7 subfamily.

In Oryza sativa subsp. japonica (Rice), this protein is Kinesin-like protein KIN-7G.